Reading from the N-terminus, the 92-residue chain is Large ribosomal subunit protein bL34m (92 aa).

A mitochondrion-targeting transit peptide spans methionine 1–glycine 46. Positions threonine 40–asparagine 57 are enriched in polar residues. The disordered stretch occupies residues threonine 40–lysine 63. Phosphoserine is present on serine 71.

It belongs to the bacterial ribosomal protein bL34 family. Component of the mitochondrial ribosome large subunit (39S) which comprises a 16S rRNA and about 50 distinct proteins.

Its subcellular location is the mitochondrion. In Macaca fascicularis (Crab-eating macaque), this protein is Large ribosomal subunit protein bL34m (MRPL34).